Consider the following 704-residue polypeptide: Protein NPG1 (704 aa).

8 TPR repeats span residues 24–57 (NGIC…SLNF), 58–90 (EEAR…QAAI), 177–210 (SHAV…QWNL), 309–342 (IERW…HEQP), 430–463 (PDLI…TGGS), 555–588 (FEVW…KQYS), 589–622 (ASML…DGSS), and 662–695 (RKAW…EESD).

Interacts with calmodulin in a calcium-dependent manner. As to expression, expressed only in pollen and in pollen tubes.

Its function is as follows. Calmodulin-binding protein essential for pollen germination, but not necessary for microsporogenesis or gametogenesis. The protein is Protein NPG1 of Arabidopsis thaliana (Mouse-ear cress).